We begin with the raw amino-acid sequence, 159 residues long: 17 kDa surface antigen (159 aa).

The signal sequence occupies residues 1 to 19 (MKIISKIIVILLAASMLQA). C20 carries the N-palmitoyl cysteine lipid modification. C20 carries the S-diacylglycerol cysteine lipid modification.

Belongs to the rickettsiale 17 kDa surface antigen family.

Its subcellular location is the cell outer membrane. This chain is 17 kDa surface antigen (omp), found in Rickettsia bellii.